An 860-amino-acid polypeptide reads, in one-letter code: Linoleate 9S-lipoxygenase A (860 aa).

Residues 29–159 form the PLAT domain; that stretch reads NALDFTDLAG…RYKSDRIFFA (131 aa). Residues 162–860 form the Lipoxygenase domain; sequence PYLPSETPEL…GKGIPNSVSI (699 aa). The disordered stretch occupies residues 209-246; sequence PDQGKENVRTTLGGSADYPYPRRGRTGRPPTRTDPKSE. Fe cation-binding residues include H521, H526, H712, N716, and I860.

It belongs to the lipoxygenase family. In terms of assembly, monomer. The cofactor is Fe cation. Expressed in germinating seeds as well as in ripening fruit.

The protein localises to the cytoplasm. The catalysed reaction is (9Z,12Z)-octadecadienoate + O2 = (9S)-hydroperoxy-(10E,12Z)-octadecadienoate. Its pathway is lipid metabolism; oxylipin biosynthesis. Plant lipoxygenase may be involved in a number of diverse aspects of plant physiology including growth and development, pest resistance, and senescence or responses to wounding. It catalyzes the hydroperoxidation of lipids containing a cis,cis-1,4-pentadiene structure. This Solanum lycopersicum (Tomato) protein is Linoleate 9S-lipoxygenase A (LOX1.1).